The primary structure comprises 119 residues: Large ribosomal subunit protein bL20c (119 aa).

This sequence belongs to the bacterial ribosomal protein bL20 family.

It localises to the plastid. Its subcellular location is the chloroplast. Functionally, binds directly to 23S ribosomal RNA and is necessary for the in vitro assembly process of the 50S ribosomal subunit. It is not involved in the protein synthesizing functions of that subunit. The chain is Large ribosomal subunit protein bL20c (rpl20) from Pinus thunbergii (Japanese black pine).